Reading from the N-terminus, the 34-residue chain is Photosystem II reaction center protein M (34 aa).

The helical transmembrane segment at 5–25 threads the bilayer; it reads ILAFSATALLILFPTALLLIL.

Belongs to the PsbM family. PSII is composed of 1 copy each of membrane proteins PsbA, PsbB, PsbC, PsbD, PsbE, PsbF, PsbH, PsbI, PsbJ, PsbK, PsbL, PsbM, PsbT, PsbX, PsbY, PsbZ, Psb30/Ycf12, at least 3 peripheral proteins of the oxygen-evolving complex and a large number of cofactors. It forms dimeric complexes.

The protein resides in the plastid membrane. Its function is as follows. One of the components of the core complex of photosystem II (PSII). PSII is a light-driven water:plastoquinone oxidoreductase that uses light energy to abstract electrons from H(2)O, generating O(2) and a proton gradient subsequently used for ATP formation. It consists of a core antenna complex that captures photons, and an electron transfer chain that converts photonic excitation into a charge separation. This subunit is found at the monomer-monomer interface. The polypeptide is Photosystem II reaction center protein M (Cuscuta gronovii (Common dodder)).